The sequence spans 579 residues: A-type ATP synthase subunit A (579 aa).

229 to 236 provides a ligand contact to ATP; sequence GPFGSGKT.

Belongs to the ATPase alpha/beta chains family. Has multiple subunits with at least A(3), B(3), C, D, E, F, H, I and proteolipid K(x).

The protein localises to the cell membrane. The enzyme catalyses ATP + H2O + 4 H(+)(in) = ADP + phosphate + 5 H(+)(out). Its function is as follows. Component of the A-type ATP synthase that produces ATP from ADP in the presence of a proton gradient across the membrane. The A chain is the catalytic subunit. In Methanocella arvoryzae (strain DSM 22066 / NBRC 105507 / MRE50), this protein is A-type ATP synthase subunit A.